Here is a 197-residue protein sequence, read N- to C-terminus: Carnitine operon protein CaiE (197 aa).

Residues threonine 177–glutamine 197 are disordered. Over residues glycine 188–glutamine 197 the composition is skewed to basic and acidic residues.

This sequence belongs to the transferase hexapeptide repeat family.

It functions in the pathway amine and polyamine metabolism; carnitine metabolism. Its function is as follows. Overproduction of CaiE stimulates the activity of CaiB and CaiD. This is Carnitine operon protein CaiE from Proteus sp. (strain LE138).